The sequence spans 251 residues: uncharacterized protein (251 aa).

Residues 1–18 form the signal peptide; that stretch reads MKILIILSIILCSLFGRA.

Belongs to the MlaA family.

This is an uncharacterized protein from Rickettsia prowazekii (strain Madrid E).